Reading from the N-terminus, the 619-residue chain is Putative zinc transporter At3g08650 (619 aa).

15 consecutive transmembrane segments (helical) span residues 25–45 (MMHS…VVFI), 102–122 (VALF…PFFF), 129–149 (WAGI…FDLV), 155–175 (HGSG…IWLC), 198–218 (VVLV…GVGV), 230–250 (LLVT…VSMV), 261–281 (AMLW…PAFL), 289–309 (FLPF…IAEV), 354–374 (GFFV…FLVA), 383–403 (HALL…WRPL), 405–425 (LLLS…IGAG), 465–485 (LLAC…LGVA), 528–548 (AAAL…LAGI), 552–572 (GLDH…WQVI), and 585–605 (VGMV…RLVC).

This sequence belongs to the ZIP transporter (TC 2.A.5) family. ZupT subfamily.

It localises to the membrane. Its function is as follows. May transport zinc. This Arabidopsis thaliana (Mouse-ear cress) protein is Putative zinc transporter At3g08650.